The primary structure comprises 241 residues: Beta-casein (241 aa).

Residues 1-15 form the signal peptide; sequence MKILILACLVALALA. The disordered stretch occupies residues 21–45; that stretch reads LNVSSETVESLSSNEPDSSSEESIT. At Ser-24 the chain carries Phosphoserine; in form 4-P, form 5-P, form 6-P and form 7-P. Ser-25 carries the phosphoserine; in form 7-P modification. Position 27 is a phosphothreonine; in form 6-P and form 7-P (Thr-27). Phosphoserine occurs at positions 30 and 32. Ser-33 carries the post-translational modification Phosphoserine; in form 5-P, form 6-P and form 7-P. Ser-38, Ser-39, and Ser-40 each carry phosphoserine; in form 4-P, form 5-P, form 6-P and form 7-P. Asn-150 is modified (deamidated asparagine).

It belongs to the beta-casein family. There are at least five different forms found in milk, with varying degrees of phosphorylation. These include form 3-P which is phosphorylated at three sites that have not been determined, this form is present in very low amounts, form 4-P which is phosphorylated at four sites, form 5-P which is phosphorylated at five sites, form 6-P which is phosphorylated at six sites, and form 7-P which is phosphorylated at seven sites. Post-translationally, spontaneous deamidation of Asn-150 produces aspartate or isoaspartate. As to expression, mammary gland specific. Secreted in milk.

Its subcellular location is the secreted. Functionally, important role in determination of the surface properties of the casein micelles. This chain is Beta-casein, found in Equus caballus (Horse).